The following is a 74-amino-acid chain: Protein SlyX homolog (74 aa).

The segment at 54-74 (QDRNPDAQEPYSLRDEIPPHY) is disordered.

This sequence belongs to the SlyX family.

This chain is Protein SlyX homolog, found in Neisseria gonorrhoeae (strain ATCC 700825 / FA 1090).